The primary structure comprises 244 residues: Lipoprotein-releasing system ATP-binding protein LolD (244 aa).

The region spanning 19–244 (IRAEALAKTY…KLRELAPSAV (226 aa)) is the ABC transporter domain. Residue 55–62 (GASGAGKS) coordinates ATP.

Belongs to the ABC transporter superfamily. Lipoprotein translocase (TC 3.A.1.125) family. In terms of assembly, the complex is composed of two ATP-binding proteins (LolD) and two transmembrane proteins (LolC and LolE).

It localises to the cell inner membrane. Its function is as follows. Part of the ABC transporter complex LolCDE involved in the translocation of mature outer membrane-directed lipoproteins, from the inner membrane to the periplasmic chaperone, LolA. Responsible for the formation of the LolA-lipoprotein complex in an ATP-dependent manner. In Xanthomonas oryzae pv. oryzae (strain MAFF 311018), this protein is Lipoprotein-releasing system ATP-binding protein LolD.